The primary structure comprises 318 residues: Aspartate carbamoyltransferase catalytic subunit (318 aa).

2 residues coordinate carbamoyl phosphate: Arg62 and Thr63. Lys90 is a binding site for L-aspartate. Residues Arg112, His140, and Gln143 each coordinate carbamoyl phosphate. 2 residues coordinate L-aspartate: Arg173 and Arg227. 2 residues coordinate carbamoyl phosphate: Gly268 and Pro269.

Belongs to the aspartate/ornithine carbamoyltransferase superfamily. ATCase family. As to quaternary structure, heterododecamer (2C3:3R2) of six catalytic PyrB chains organized as two trimers (C3), and six regulatory PyrI chains organized as three dimers (R2).

It catalyses the reaction carbamoyl phosphate + L-aspartate = N-carbamoyl-L-aspartate + phosphate + H(+). The protein operates within pyrimidine metabolism; UMP biosynthesis via de novo pathway; (S)-dihydroorotate from bicarbonate: step 2/3. Its function is as follows. Catalyzes the condensation of carbamoyl phosphate and aspartate to form carbamoyl aspartate and inorganic phosphate, the committed step in the de novo pyrimidine nucleotide biosynthesis pathway. The polypeptide is Aspartate carbamoyltransferase catalytic subunit (Desulfotalea psychrophila (strain LSv54 / DSM 12343)).